An 86-amino-acid chain; its full sequence is Centromere protein W (86 aa).

The protein belongs to the CENP-W/WIP1 family. Heterodimer with CENPT; this dimer coassembles with CENPS-CENPX heterodimers at centromeres to form the tetrameric CENP-T-W-S-X complex, which is a subcomplex of the large constitutive centromere-associated network (CCAN, also known as the interphase centromere complex or ICEN). Interacts with NPM1.

The protein resides in the nucleus. It localises to the chromosome. Its subcellular location is the centromere. The protein localises to the kinetochore. It is found in the nucleus matrix. The protein resides in the nucleolus. In terms of biological role, component of the CENPA-NAC (nucleosome-associated) complex, a complex that plays a central role in assembly of kinetochore proteins, mitotic progression and chromosome segregation. The CENPA-NAC complex recruits the CENPA-CAD (nucleosome distal) complex and may be involved in incorporation of newly synthesized CENPA into centromeres. Part of a nucleosome-associated complex that binds specifically to histone H3-containing nucleosomes at the centromere, as opposed to nucleosomes containing CENPA. Component of the heterotetrameric CENP-T-W-S-X complex that binds and supercoils DNA, and plays an important role in kinetochore assembly. CENPW has a fundamental role in kinetochore assembly and function. It is one of the inner kinetochore proteins, with most further proteins binding downstream. Required for normal chromosome organization and normal progress through mitosis. In Mus musculus (Mouse), this protein is Centromere protein W (Cenpw).